Here is a 142-residue protein sequence, read N- to C-terminus: Large ribosomal subunit protein uL13 (142 aa).

This sequence belongs to the universal ribosomal protein uL13 family. In terms of assembly, part of the 50S ribosomal subunit.

In terms of biological role, this protein is one of the early assembly proteins of the 50S ribosomal subunit, although it is not seen to bind rRNA by itself. It is important during the early stages of 50S assembly. The polypeptide is Large ribosomal subunit protein uL13 (Klebsiella pneumoniae (strain 342)).